We begin with the raw amino-acid sequence, 195 residues long: Imidazoleglycerol-phosphate dehydratase (195 aa).

The protein belongs to the imidazoleglycerol-phosphate dehydratase family.

Its subcellular location is the cytoplasm. The catalysed reaction is D-erythro-1-(imidazol-4-yl)glycerol 3-phosphate = 3-(imidazol-4-yl)-2-oxopropyl phosphate + H2O. It functions in the pathway amino-acid biosynthesis; L-histidine biosynthesis; L-histidine from 5-phospho-alpha-D-ribose 1-diphosphate: step 6/9. This chain is Imidazoleglycerol-phosphate dehydratase, found in Geobacter sulfurreducens (strain ATCC 51573 / DSM 12127 / PCA).